The sequence spans 287 residues: Pantothenate synthetase (287 aa).

30-37 contributes to the ATP binding site; that stretch reads MGNLHSGH. His37 serves as the catalytic Proton donor. Residue Gln61 participates in (R)-pantoate binding. A beta-alanine-binding site is contributed by Gln61. 149 to 152 contacts ATP; sequence GEKD. Gln155 provides a ligand contact to (R)-pantoate. Residues Val178 and 186–189 each bind ATP; that span reads LSSR.

Belongs to the pantothenate synthetase family. As to quaternary structure, homodimer.

It localises to the cytoplasm. The enzyme catalyses (R)-pantoate + beta-alanine + ATP = (R)-pantothenate + AMP + diphosphate + H(+). Its pathway is cofactor biosynthesis; (R)-pantothenate biosynthesis; (R)-pantothenate from (R)-pantoate and beta-alanine: step 1/1. Its function is as follows. Catalyzes the condensation of pantoate with beta-alanine in an ATP-dependent reaction via a pantoyl-adenylate intermediate. This chain is Pantothenate synthetase, found in Pseudomonas putida (strain W619).